Consider the following 210-residue polypeptide: Protein SgcE (210 aa).

Ser-6 serves as a coordination point for substrate. His-31, Asp-33, and His-64 together coordinate a divalent metal cation. Asp-33 functions as the Proton acceptor in the catalytic mechanism. Substrate contacts are provided by residues His-64, 140–143 (DGQG), 169–171 (DGG), and 191–192 (GR). A divalent metal cation is bound at residue Asp-169. Residue Asp-169 is the Proton donor of the active site.

Belongs to the ribulose-phosphate 3-epimerase family. Co(2+) is required as a cofactor. Fe(2+) serves as cofactor. The cofactor is Mn(2+). Requires Zn(2+) as cofactor.

The protein operates within carbohydrate degradation. Probable pentose-5-phosphate 3-epimerase. This chain is Protein SgcE (sgcE), found in Escherichia coli (strain K12).